The primary structure comprises 274 residues: MAD2L1-binding protein (274 aa).

The interaction with MAD2L1 stretch occupies residues 45–78; sequence ASEAFCPRDCMVPVVFPGPVSQEGCCQFTCELLK. Ser-102 carries the phosphoserine modification.

It belongs to the MAD2L1BP family. Interacts with MAD2L1.

It localises to the nucleus. Its subcellular location is the cytoplasm. It is found in the cytoskeleton. The protein localises to the spindle. Its function is as follows. May function to silence the spindle checkpoint and allow mitosis to proceed through anaphase by binding MAD2L1 after it has become dissociated from the MAD2L1-CDC20 complex. The protein is MAD2L1-binding protein (MAD2L1BP) of Homo sapiens (Human).